Here is a 93-residue protein sequence, read N- to C-terminus: Large ribosomal subunit protein uL23 (93 aa).

This sequence belongs to the universal ribosomal protein uL23 family. Part of the 50S ribosomal subunit. Contacts protein L29, and trigger factor when it is bound to the ribosome.

One of the early assembly proteins it binds 23S rRNA. One of the proteins that surrounds the polypeptide exit tunnel on the outside of the ribosome. Forms the main docking site for trigger factor binding to the ribosome. In Sulfurovum sp. (strain NBC37-1), this protein is Large ribosomal subunit protein uL23.